Reading from the N-terminus, the 363-residue chain is Biotin synthase (363 aa).

Residues 38–266 enclose the Radical SAM core domain; sequence NTVQVSTLLS…ETQVRLSAGR (229 aa). Residues Cys53, Cys57, and Cys60 each coordinate [4Fe-4S] cluster. 4 residues coordinate [2Fe-2S] cluster: Cys97, Cys129, Cys189, and Arg261. A disordered region spans residues 315 to 363; the sequence is KAFEKKSQPESVAAEKSKYQSQGEKPRWSRPEHKIDRNLEAQQNAKTKA. Basic and acidic residues predominate over residues 316–353; the sequence is AFEKKSQPESVAAEKSKYQSQGEKPRWSRPEHKIDRNL. A compositionally biased stretch (polar residues) spans 354 to 363; sequence EAQQNAKTKA.

Belongs to the radical SAM superfamily. Biotin synthase family. In terms of assembly, homodimer. The cofactor is [4Fe-4S] cluster. [2Fe-2S] cluster is required as a cofactor.

It catalyses the reaction (4R,5S)-dethiobiotin + (sulfur carrier)-SH + 2 reduced [2Fe-2S]-[ferredoxin] + 2 S-adenosyl-L-methionine = (sulfur carrier)-H + biotin + 2 5'-deoxyadenosine + 2 L-methionine + 2 oxidized [2Fe-2S]-[ferredoxin]. It functions in the pathway cofactor biosynthesis; biotin biosynthesis; biotin from 7,8-diaminononanoate: step 2/2. In terms of biological role, catalyzes the conversion of dethiobiotin (DTB) to biotin by the insertion of a sulfur atom into dethiobiotin via a radical-based mechanism. The chain is Biotin synthase from Christiangramia forsetii (strain DSM 17595 / CGMCC 1.15422 / KT0803) (Gramella forsetii).